Reading from the N-terminus, the 330-residue chain is Ferredoxin--NADP reductase 2 (330 aa).

FAD contacts are provided by glutamate 37, glutamine 45, tyrosine 50, valine 90, phenylalanine 124, aspartate 286, and threonine 327.

This sequence belongs to the ferredoxin--NADP reductase type 2 family. In terms of assembly, homodimer. The cofactor is FAD.

It carries out the reaction 2 reduced [2Fe-2S]-[ferredoxin] + NADP(+) + H(+) = 2 oxidized [2Fe-2S]-[ferredoxin] + NADPH. This is Ferredoxin--NADP reductase 2 from Shouchella clausii (strain KSM-K16) (Alkalihalobacillus clausii).